A 40-amino-acid chain; its full sequence is Large ribosomal subunit protein bL36 (40 aa).

The protein belongs to the bacterial ribosomal protein bL36 family.

The protein is Large ribosomal subunit protein bL36 of Corynebacterium glutamicum (strain R).